The primary structure comprises 114 residues: Cytochrome c2 (114 aa).

Pyrrolidone carboxylic acid is present on Gln1. 4 residues coordinate heme c: Cys13, Cys16, His17, and Met93.

This sequence belongs to the cytochrome c family. Post-translationally, binds 1 heme c group covalently per subunit.

The protein localises to the periplasm. Its function is as follows. Cytochrome c2 is found mainly in purple, non-sulfur, photosynthetic bacteria where it functions as the electron donor to the oxidized bacteriochlorophyll in the photophosphorylation pathway. However, it may also have a role in the respiratory chain and is found in some non-photosynthetic bacteria. This chain is Cytochrome c2, found in Rhodopseudomonas palustris.